A 157-amino-acid polypeptide reads, in one-letter code: Small ribosomal subunit protein uS7 (157 aa).

This sequence belongs to the universal ribosomal protein uS7 family. As to quaternary structure, part of the 30S ribosomal subunit. Contacts proteins S9 and S11.

Functionally, one of the primary rRNA binding proteins, it binds directly to 16S rRNA where it nucleates assembly of the head domain of the 30S subunit. Is located at the subunit interface close to the decoding center, probably blocks exit of the E-site tRNA. This Acidovorax ebreus (strain TPSY) (Diaphorobacter sp. (strain TPSY)) protein is Small ribosomal subunit protein uS7.